The following is a 301-amino-acid chain: Small ribosomal subunit protein uS3 (301 aa).

The KH type-2 domain occupies 39 to 107; the sequence is VREYLKAKLK…PVAVNIEEVR (69 aa). The segment at 211-301 is disordered; it reads GESPGAKLDA…AAAADGTKTE (91 aa). Basic and acidic residues predominate over residues 224–244; it reads DEERKPRGPRRDARPGSDRPA. The segment covering 245-257 has biased composition (low complexity); sequence PRGARAPRAPAGG.

Belongs to the universal ribosomal protein uS3 family. As to quaternary structure, part of the 30S ribosomal subunit. Forms a tight complex with proteins S10 and S14.

In terms of biological role, binds the lower part of the 30S subunit head. Binds mRNA in the 70S ribosome, positioning it for translation. This Polaromonas sp. (strain JS666 / ATCC BAA-500) protein is Small ribosomal subunit protein uS3.